Here is a 1336-residue protein sequence, read N- to C-terminus: Vascular endothelial growth factor receptor 1 (1336 aa).

Residues methionine 1–glycine 22 form the signal peptide. At tyrosine 23–glutamate 758 the chain is on the extracellular side. 7 consecutive Ig-like C2-type domains span residues proline 32 to glutamate 121, glycine 151 to histidine 214, leucine 230 to histidine 327, serine 335 to threonine 421, glutamine 429 to arginine 549, proline 556 to valine 655, and proline 661 to threonine 747. Cystine bridges form between cysteine 53-cysteine 107 and cysteine 158-cysteine 207. Asparagine 100, asparagine 164, asparagine 196, and asparagine 251 each carry an N-linked (GlcNAc...) asparagine glycan. A disulfide bridge links cysteine 252 with cysteine 311. 8 N-linked (GlcNAc...) asparagine glycosylation sites follow: asparagine 323, asparagine 417, asparagine 474, asparagine 516, asparagine 597, asparagine 625, asparagine 666, and asparagine 713. 2 disulfide bridges follow: cysteine 454/cysteine 535 and cysteine 577/cysteine 636. Cysteines 682 and 731 form a disulfide. A helical membrane pass occupies residues leucine 759–isoleucine 780. Topologically, residues arginine 781–alanine 1336 are cytoplasmic. Positions leucine 827 to leucine 1158 constitute a Protein kinase domain. ATP-binding positions include leucine 833–valine 841 and lysine 861. Tyrosine 914 bears the Phosphotyrosine; by autocatalysis mark. The span at lysine 941 to leucine 957 shows a compositional bias: basic and acidic residues. The interval lysine 941–glycine 982 is disordered. Positions serine 959–serine 969 are enriched in low complexity. Aspartate 1022 (proton acceptor) is an active-site residue. Residues tyrosine 1053, tyrosine 1169, tyrosine 1213, tyrosine 1242, tyrosine 1325, and tyrosine 1331 each carry the phosphotyrosine; by autocatalysis modification. A disordered region spans residues arginine 1304–asparagine 1326.

It belongs to the protein kinase superfamily. Tyr protein kinase family. CSF-1/PDGF receptor subfamily. In terms of assembly, interacts with VEGFA, VEGFB and PGF. Monomer in the absence of bound VEGFA, VEGFB or PGF. Homodimer in the presence of bound VEGFA, VEGFB and PGF. Can also form a heterodimer with KDR. Interacts (tyrosine phosphorylated) with CBL, CRK, GRB2, NCK1, PIK3R1, PLCG, PSEN1 and PTPN11. Probably interacts with PTPRB. Interacts with RACK1. Identified in a complex with CBL and CD2AP. Post-translationally, N-glycosylated. In terms of processing, ubiquitinated after VEGFA-mediated autophosphorylation, leading to proteolytic degradation. Autophosphorylated on tyrosine residues upon ligand binding. Autophosphorylation occurs in trans, i.e. one subunit of the dimeric receptor phosphorylates tyrosine residues on the other subunit. Phosphorylation at Tyr-1169 is important for interaction with PLCG. Phosphorylation at Tyr-1213 is important for interaction with PIK3R1, PTPN11, GRB2, and PLCG. Phosphorylation at Tyr-1331 is important for endocytosis and for interaction with CBL, NCK1 and CRK. Is probably dephosphorylated by PTPRB.

Its subcellular location is the cell membrane. It localises to the endosome. The enzyme catalyses L-tyrosyl-[protein] + ATP = O-phospho-L-tyrosyl-[protein] + ADP + H(+). Its activity is regulated as follows. Present in an inactive conformation in the absence of bound ligand. Binding of VEGFA, VEGFB or PGF leads to dimerization and activation by autophosphorylation on tyrosine residues. Tyrosine-protein kinase that acts as a cell-surface receptor for VEGFA, VEGFB and PGF, and plays an essential role in the development of embryonic vasculature, the regulation of angiogenesis, cell survival, cell migration, macrophage function, chemotaxis, and cancer cell invasion. Acts as a positive regulator of postnatal retinal hyaloid vessel regression. May play an essential role as a negative regulator of embryonic angiogenesis by inhibiting excessive proliferation of endothelial cells. Can promote endothelial cell proliferation, survival and angiogenesis in adulthood. Its function in promoting cell proliferation seems to be cell-type specific. Promotes PGF-mediated proliferation of endothelial cells, and proliferation of some types of cancer cells, but does not promote proliferation of normal fibroblasts. Has very high affinity for VEGFA and relatively low protein kinase activity; may function as a negative regulator of VEGFA signaling by limiting the amount of free VEGFA and preventing its binding to KDR. Modulates KDR signaling by forming heterodimers with KDR. Ligand binding leads to the activation of several signaling cascades. Activation of PLCG leads to the production of the cellular signaling molecules diacylglycerol and inositol 1,4,5-trisphosphate and the activation of protein kinase C. Mediates phosphorylation of PIK3R1, the regulatory subunit of phosphatidylinositol 3-kinase, leading to the activation of phosphatidylinositol kinase and the downstream signaling pathway. Mediates activation of MAPK1/ERK2, MAPK3/ERK1 and the MAP kinase signaling pathway, as well as of the AKT1 signaling pathway. Phosphorylates SRC, YES1 and PLCG, and may also phosphorylate CBL. Promotes phosphorylation of AKT1 and PTK2/FAK1. The protein is Vascular endothelial growth factor receptor 1 (Flt1) of Rattus norvegicus (Rat).